A 381-amino-acid chain; its full sequence is Chaperone protein DnaJ (381 aa).

Positions 5–73 (DYYEVLGVGK…EKKAAYDQYG (69 aa)) constitute a J domain. The segment at 141–219 (GHEAQIRVPH…CHGQGKLKSQ (79 aa)) adopts a CR-type zinc-finger fold. Residues Cys-154, Cys-157, Cys-171, Cys-174, Cys-193, Cys-196, Cys-207, and Cys-210 each contribute to the Zn(2+) site. 4 CXXCXGXG motif repeats span residues 154–161 (CDHCHGNG), 171–178 (CPTCHGAG), 193–200 (CPKCHGSG), and 207–214 (CTKCHGQG). The segment at 357–381 (SVHEGGSRHSPQEQSWLDKVKSFFS) is disordered.

It belongs to the DnaJ family. In terms of assembly, homodimer. The cofactor is Zn(2+).

It localises to the cytoplasm. Its function is as follows. Participates actively in the response to hyperosmotic and heat shock by preventing the aggregation of stress-denatured proteins and by disaggregating proteins, also in an autonomous, DnaK-independent fashion. Unfolded proteins bind initially to DnaJ; upon interaction with the DnaJ-bound protein, DnaK hydrolyzes its bound ATP, resulting in the formation of a stable complex. GrpE releases ADP from DnaK; ATP binding to DnaK triggers the release of the substrate protein, thus completing the reaction cycle. Several rounds of ATP-dependent interactions between DnaJ, DnaK and GrpE are required for fully efficient folding. Also involved, together with DnaK and GrpE, in the DNA replication of plasmids through activation of initiation proteins. The polypeptide is Chaperone protein DnaJ (Cupriavidus necator (strain ATCC 17699 / DSM 428 / KCTC 22496 / NCIMB 10442 / H16 / Stanier 337) (Ralstonia eutropha)).